Reading from the N-terminus, the 404-residue chain is Phosphopentomutase (404 aa).

Positions 10, 303, 308, 344, 345, and 356 each coordinate Mn(2+).

It belongs to the phosphopentomutase family. Mn(2+) serves as cofactor.

It localises to the cytoplasm. The enzyme catalyses 2-deoxy-alpha-D-ribose 1-phosphate = 2-deoxy-D-ribose 5-phosphate. It catalyses the reaction alpha-D-ribose 1-phosphate = D-ribose 5-phosphate. It participates in carbohydrate degradation; 2-deoxy-D-ribose 1-phosphate degradation; D-glyceraldehyde 3-phosphate and acetaldehyde from 2-deoxy-alpha-D-ribose 1-phosphate: step 1/2. Functionally, isomerase that catalyzes the conversion of deoxy-ribose 1-phosphate (dRib-1-P) and ribose 1-phosphate (Rib-1-P) to deoxy-ribose 5-phosphate (dRib-5-P) and ribose 5-phosphate (Rib-5-P), respectively. This Shewanella baltica (strain OS155 / ATCC BAA-1091) protein is Phosphopentomutase.